Consider the following 473-residue polypeptide: Cysteine--tRNA ligase (473 aa).

C28 contacts Zn(2+). Positions 30 to 40 (MTVYDFCHIGH) match the 'HIGH' region motif. Positions 212, 237, and 241 each coordinate Zn(2+). The 'KMSKS' region motif lies at 277 to 281 (KMSKS). An ATP-binding site is contributed by K280.

It belongs to the class-I aminoacyl-tRNA synthetase family. In terms of assembly, monomer. Zn(2+) is required as a cofactor.

The protein localises to the cytoplasm. The catalysed reaction is tRNA(Cys) + L-cysteine + ATP = L-cysteinyl-tRNA(Cys) + AMP + diphosphate. The protein is Cysteine--tRNA ligase of Polynucleobacter necessarius subsp. necessarius (strain STIR1).